Consider the following 641-residue polypeptide: UvrABC system protein C (641 aa).

Residues 16–95 (ESPGVYRFWD…IKQYEPRFNI (80 aa)) enclose the GIY-YIG domain. Positions 208–243 (TEYLRRLEKDMRAAAAAEDFERAARLRDDAAALRLA) constitute a UVR domain.

This sequence belongs to the UvrC family. In terms of assembly, interacts with UvrB in an incision complex.

The protein resides in the cytoplasm. In terms of biological role, the UvrABC repair system catalyzes the recognition and processing of DNA lesions. UvrC both incises the 5' and 3' sides of the lesion. The N-terminal half is responsible for the 3' incision and the C-terminal half is responsible for the 5' incision. This chain is UvrABC system protein C, found in Acidothermus cellulolyticus (strain ATCC 43068 / DSM 8971 / 11B).